We begin with the raw amino-acid sequence, 470 residues long: Sorting nexin-17 (470 aa).

Residues M1–T109 form the PX domain. A 1,2-diacyl-sn-glycero-3-phospho-(1D-myo-inositol-3-phosphate) contacts are provided by R36, S38, K62, and R75. Positions E115–W206 constitute a Ras-associating domain. The FERM-like stretch occupies residues E115–L432. The interval G270–L432 is PTB-like F3 module. A phosphoserine mark is found at S336, S407, S409, S415, S421, S437, and S440. Positions G401 to R426 are disordered. The segment at G458–L470 is interacts with the retriever complex.

The protein belongs to the sorting nexin family. In terms of assembly, monomer. Interacts with APP (via cytoplasmic YXNPXY motif). Interacts with KIF1B. Interacts with the C-termini of P-selectin, PTC, LDLR, VLDLR, LRP1 and LRP8. Interacts with KRIT1 (via N-terminus). Interacts with HRAS. Interacts with ITGB1 and ITGB5 (via NPxY motif). Interacts with CCDC22 and CCDC93; the interaction associates SNX17 with the CCC complex. Interacts (via C-terminus) with VPS26C and VPS35L; the interactions are direct and associate SNX17 with the retriever complex.

The protein localises to the cytoplasm. It is found in the early endosome. The protein resides in the cytoplasmic vesicle membrane. Its function is as follows. Critical regulator of endosomal recycling of numerous surface proteins, including integrins, signaling receptor and channels. Binds to NPxY sequences in the cytoplasmic tails of target cargos. Associates with retriever and CCC complexes to prevent lysosomal degradation and promote cell surface recycling of numerous cargos such as integrins ITGB1, ITGB5 and their associated alpha subunits. Also required for maintenance of normal cell surface levels of APP and LRP1. Interacts with membranes containing phosphatidylinositol 3-phosphate (PtdIns(3P)). The protein is Sorting nexin-17 (SNX17) of Homo sapiens (Human).